The primary structure comprises 296 residues: NAD kinase (296 aa).

Asp78 serves as the catalytic Proton acceptor. Residues 78–79 (DG), 152–153 (ND), Arg180, Asp182, and Gln251 contribute to the NAD(+) site.

Belongs to the NAD kinase family. Requires a divalent metal cation as cofactor.

It localises to the cytoplasm. The enzyme catalyses NAD(+) + ATP = ADP + NADP(+) + H(+). Functionally, involved in the regulation of the intracellular balance of NAD and NADP, and is a key enzyme in the biosynthesis of NADP. Catalyzes specifically the phosphorylation on 2'-hydroxyl of the adenosine moiety of NAD to yield NADP. The polypeptide is NAD kinase (Neisseria meningitidis serogroup C (strain 053442)).